We begin with the raw amino-acid sequence, 472 residues long: Interferon-induced protein with tetratricopeptide repeats 2 (472 aa).

At serine 2 the chain carries N-acetylserine. TPR repeat units lie at residues 51–89 (ATMC…PDQV), 90–135 (EIRS…RIEN), 136–171 (PALD…DPKN), 172–208 (PEFT…SPDN), 244–277 (IDTL…LPNN), 278–333 (AYVH…MLEY), 334–364 (SCSF…KDLP), 365–403 (PGPK…KKKT), and 404–445 (IPQK…GGQQ). Residues 441-472 (GGGQQADKDSERGVDSANQVPSASLDEDGAEY) are disordered.

The protein belongs to the IFIT family. As to quaternary structure, domain-swapped homodimer. Component of an interferon-dependent multiprotein complex, at least composed of IFIT1, IFIT2 and IFIT3. Interacts with IFIT1 and IFIT3. Interacts with STING1/MITA and disrupts its interaction with MAVS or TBK1. Interacts with EIF3C.

The protein localises to the cytoplasm. It localises to the endoplasmic reticulum. IFN-induced antiviral protein which inhibits expression of viral messenger RNAs lacking 2'-O-methylation of the 5' cap. The ribose 2'-O-methylation would provide a molecular signature to distinguish between self and non-self mRNAs by the host during viral infection. Viruses evolved several ways to evade this restriction system such as encoding their own 2'-O-methylase for their mRNAs or by stealing host cap containing the 2'-O-methylation (cap snatching mechanism). Binds AU-rich viral RNAs, with or without 5' triphosphorylation, RNA-binding is required for antiviral activity. Can promote apoptosis. The chain is Interferon-induced protein with tetratricopeptide repeats 2 (Ifit2) from Mus musculus (Mouse).